Here is a 313-residue protein sequence, read N- to C-terminus: Ribosomal RNA small subunit methyltransferase H (313 aa).

S-adenosyl-L-methionine contacts are provided by residues 34–36 (GGH), Asp55, Phe82, Asp103, and Gln110.

This sequence belongs to the methyltransferase superfamily. RsmH family.

It is found in the cytoplasm. The enzyme catalyses cytidine(1402) in 16S rRNA + S-adenosyl-L-methionine = N(4)-methylcytidine(1402) in 16S rRNA + S-adenosyl-L-homocysteine + H(+). Its function is as follows. Specifically methylates the N4 position of cytidine in position 1402 (C1402) of 16S rRNA. The polypeptide is Ribosomal RNA small subunit methyltransferase H (Pelobacter propionicus (strain DSM 2379 / NBRC 103807 / OttBd1)).